The chain runs to 540 residues: Threonine--tRNA ligase catalytic subunit (540 aa).

The interval 134–428 (DHRIIGERLD…LLEHFRGKLP (295 aa)) is catalytic. Cys226, His277, and His405 together coordinate Zn(2+).

It belongs to the class-II aminoacyl-tRNA synthetase family. In terms of assembly, homodimer. Probably interacts with its editing subunit. Requires Zn(2+) as cofactor.

The protein localises to the cytoplasm. It carries out the reaction tRNA(Thr) + L-threonine + ATP = L-threonyl-tRNA(Thr) + AMP + diphosphate + H(+). Its function is as follows. Catalyzes the attachment of threonine to tRNA(Thr) in a two-step reaction: L-threonine is first activated by ATP to form Thr-AMP and then transferred to the acceptor end of tRNA(Thr). Also activates L-serine and transfers it to tRNA(Thr) but cannot deacylate incorrectly charged amino acid; unlike most archaea the editing function is found in a freestanding protein. The sequence is that of Threonine--tRNA ligase catalytic subunit from Sulfurisphaera tokodaii (strain DSM 16993 / JCM 10545 / NBRC 100140 / 7) (Sulfolobus tokodaii).